The primary structure comprises 108 residues: UPF0145 protein THA_1434 (108 aa).

Belongs to the UPF0145 family.

This chain is UPF0145 protein THA_1434, found in Thermosipho africanus (strain TCF52B).